A 348-amino-acid polypeptide reads, in one-letter code: Phosphate acyltransferase (348 aa).

Belongs to the PlsX family. As to quaternary structure, homodimer. Probably interacts with PlsY.

The protein resides in the cytoplasm. It carries out the reaction a fatty acyl-[ACP] + phosphate = an acyl phosphate + holo-[ACP]. It participates in lipid metabolism; phospholipid metabolism. In terms of biological role, catalyzes the reversible formation of acyl-phosphate (acyl-PO(4)) from acyl-[acyl-carrier-protein] (acyl-ACP). This enzyme utilizes acyl-ACP as fatty acyl donor, but not acyl-CoA. The polypeptide is Phosphate acyltransferase (Rhizobium rhizogenes (strain K84 / ATCC BAA-868) (Agrobacterium radiobacter)).